Consider the following 265-residue polypeptide: Aquaporin-5 (265 aa).

The Cytoplasmic portion of the chain corresponds to 1–12; it reads MKKEVCSLAFLK. The helical transmembrane segment at 13–33 threads the bilayer; that stretch reads AVFAEFLATLIFVFFGLASAL. Residues 34–39 lie on the Extracellular side of the membrane; that stretch reads KWPSAL. A helical transmembrane segment spans residues 40–60; it reads PTILQIALAFGLAIGTLAQAL. Over 61 to 65 the chain is Cytoplasmic; it reads GPVSG. The discontinuously helical intramembrane region spans 66 to 74; it reads GHINPAITL. The NPA 1 signature appears at 69–71; the sequence is NPA. At 75–87 the chain is on the cytoplasmic side; that stretch reads ALLVGNQISLLRA. The helical transmembrane segment at 88-108 threads the bilayer; sequence VFYVVAQLVGAIAGAGILYGL. The Extracellular portion of the chain corresponds to 109–126; it reads APGNARGNLAVNSLNNNT. Residue N124 is glycosylated (N-linked (GlcNAc...) asparagine). Residues 127 to 147 traverse the membrane as a helical segment; it reads TPGQAVVVEMILTFQLALCIF. Residues 148-158 lie on the Cytoplasmic side of the membrane; sequence SSTDSRRTSPV. A helical membrane pass occupies residues 159-179; the sequence is GSPALSIGLSVTLGHLVGIYF. Position 180 (T180) is a topological domain, extracellular. Residues 181-191 constitute an intramembrane region (discontinuously helical); the sequence is GCSMNPARSFG. Residues 185 to 187 carry the NPA 2 motif; sequence NPA. Residues 192-203 lie on the Extracellular side of the membrane; it reads PAVVMNRFSPSH. The chain crosses the membrane as a helical span at residues 204-224; the sequence is WVFWVGPIVGAAVAAILYFYL. Topologically, residues 225-265 are cytoplasmic; sequence LFPNSLSLSERVAVVKGTYESEEDWEEQREERKKTMELTAH.

It belongs to the MIP/aquaporin (TC 1.A.8) family. Homotetramer; each monomer provides an independent water pore. Interacts with TRPV4; the interaction is probably indirect and regulates TRPV4 activation by hypotonicity.

It is found in the apical cell membrane. The protein localises to the cell membrane. The protein resides in the cytoplasmic vesicle membrane. The catalysed reaction is H2O(in) = H2O(out). Its function is as follows. Aquaporins form homotetrameric transmembrane channels, with each monomer independently mediating water transport across the plasma membrane along its osmotic gradient. Plays an important role in fluid secretion in salivary glands. Required for TRPV4 activation by hypotonicity. Together with TRPV4, controls regulatory volume decrease in salivary epithelial cells. Seems to play a redundant role in water transport in the eye, lung and in sweat glands. This chain is Aquaporin-5, found in Sus scrofa (Pig).